The sequence spans 231 residues: Coproheme decarboxylase (231 aa).

Lysine 44 participates in a covalent cross-link: Isoglutamyl lysine isopeptide (Lys-Gln) (interchain with Q-Cter in protein Pup). Tyrosine 133 is an active-site residue. Histidine 156 contacts Fe-coproporphyrin III.

This sequence belongs to the ChdC family. Type 2 subfamily. Requires Fe-coproporphyrin III as cofactor.

It catalyses the reaction Fe-coproporphyrin III + 2 H2O2 + 2 H(+) = heme b + 2 CO2 + 4 H2O. The catalysed reaction is Fe-coproporphyrin III + H2O2 + H(+) = harderoheme III + CO2 + 2 H2O. The enzyme catalyses harderoheme III + H2O2 + H(+) = heme b + CO2 + 2 H2O. Its pathway is porphyrin-containing compound metabolism; protoheme biosynthesis. Involved in coproporphyrin-dependent heme b biosynthesis. Catalyzes the decarboxylation of Fe-coproporphyrin III (coproheme) to heme b (protoheme IX), the last step of the pathway. The reaction occurs in a stepwise manner with a three-propionate intermediate. This is Coproheme decarboxylase from Mycolicibacterium smegmatis (strain ATCC 700084 / mc(2)155) (Mycobacterium smegmatis).